The chain runs to 403 residues: Prostaglandin E2 receptor EP1 subtype (403 aa).

Residues Met-1 to Ser-38 lie on the Extracellular side of the membrane. N-linked (GlcNAc...) asparagine glycans are attached at residues Asn-8 and Asn-25. The chain crosses the membrane as a helical span at residues Pro-39–Gly-65. Topologically, residues Arg-66–Thr-75 are cytoplasmic. Residues Phe-76 to Leu-99 traverse the membrane as a helical segment. Topologically, residues Arg-100 to His-114 are extracellular. An intrachain disulfide couples Cys-113 to Cys-191. A helical membrane pass occupies residues Phe-115 to Val-136. At Glu-137–Arg-158 the chain is on the cytoplasmic side. The helical transmembrane segment at Leu-159–Gly-180 threads the bilayer. Residues Arg-181–Ala-204 are Extracellular-facing. The helical transmembrane segment at Leu-205–Leu-230 threads the bilayer. At Ala-231–Glu-295 the chain is on the cytoplasmic side. The tract at residues Arg-243–Arg-287 is disordered. Positions Ala-259 to Gly-278 are enriched in low complexity. Residues Met-296–Val-322 form a helical membrane-spanning segment. The Extracellular segment spans residues Gly-323–Pro-333. Residues Leu-334–Leu-355 traverse the membrane as a helical segment. At Arg-356–Leu-403 the chain is on the cytoplasmic side.

This sequence belongs to the G-protein coupled receptor 1 family.

Its subcellular location is the cell membrane. Its function is as follows. Receptor for prostaglandin E2 (PGE2). The activity of this receptor is mediated by G(q) proteins which activate a phosphatidylinositol-calcium second messenger system. May play a role as an important modulator of renal function. Implicated the smooth muscle contractile response to PGE2 in various tissues. The sequence is that of Prostaglandin E2 receptor EP1 subtype (PTGER1) from Canis lupus familiaris (Dog).